We begin with the raw amino-acid sequence, 638 residues long: DEAD-box ATP-dependent RNA helicase 52B (638 aa).

Low complexity-rich tracts occupy residues 1 to 21 (MRSS…AAAA) and 40 to 67 (GQAA…VGQP). The segment at 1–129 (MRSSWADSAA…WDRRDREPDP (129 aa)) is disordered. Gly residues predominate over residues 79-112 (VNGGGGGGGGSVGGSRQGFGAGGRGGGGGGGGGA). Basic and acidic residues predominate over residues 119–128 (GWDRRDREPD). Positions 169-197 (NTFAEIDLGDALNENIRRCKYVKPTPVQR) match the Q motif motif. Positions 200-384 (IPISIAGRDL…SDFLADYIFL (185 aa)) constitute a Helicase ATP-binding domain. Position 213–220 (213–220 (AQTGSGKT)) interacts with ATP. The short motif at 328–331 (DEAD) is the DEAD box element. Positions 411–562 (YLMDLLHAQR…EVPQWLERYA (152 aa)) constitute a Helicase C-terminal domain. Positions 565-638 (SSFGGGGGRN…GGQGFSSAWD (74 aa)) are disordered. Gly residues predominate over residues 567-583 (FGGGGGRNRRSGGGARF). Over residues 584 to 593 (GGRDFRRDRG) the composition is skewed to basic and acidic residues. A compositionally biased stretch (gly residues) spans 594–632 (SGGGGYGGGGGGYGGGGYGGGGGGGGYGGGSSYGGGGQG).

The protein belongs to the DEAD box helicase family. DDX3/DED1 subfamily.

The enzyme catalyses ATP + H2O = ADP + phosphate + H(+). This is DEAD-box ATP-dependent RNA helicase 52B (PL10B) from Oryza sativa subsp. japonica (Rice).